The chain runs to 199 residues: Probable GTP-binding protein EngB (199 aa).

One can recognise an EngB-type G domain in the interval 28 to 199; that stretch reads DLPEIALAGR…DSWDAILEQV (172 aa). GTP contacts are provided by residues 36–43, 63–67, 81–84, 148–151, and 180–182; these read GRSNVGKS, GKTQL, DVPG, TKAD, and FSS. Mg(2+)-binding residues include Ser-43 and Thr-65.

This sequence belongs to the TRAFAC class TrmE-Era-EngA-EngB-Septin-like GTPase superfamily. EngB GTPase family. Mg(2+) serves as cofactor.

Its function is as follows. Necessary for normal cell division and for the maintenance of normal septation. The chain is Probable GTP-binding protein EngB from Streptococcus pyogenes serotype M1.